The primary structure comprises 425 residues: Enolase (425 aa).

Q163 is a (2R)-2-phosphoglycerate binding site. E205 functions as the Proton donor in the catalytic mechanism. Mg(2+) contacts are provided by D242, E285, and D312. K337, R366, S367, and K388 together coordinate (2R)-2-phosphoglycerate. Residue K337 is the Proton acceptor of the active site.

This sequence belongs to the enolase family. Mg(2+) is required as a cofactor.

The protein resides in the cytoplasm. Its subcellular location is the secreted. It localises to the cell surface. It carries out the reaction (2R)-2-phosphoglycerate = phosphoenolpyruvate + H2O. The protein operates within carbohydrate degradation; glycolysis; pyruvate from D-glyceraldehyde 3-phosphate: step 4/5. Functionally, catalyzes the reversible conversion of 2-phosphoglycerate (2-PG) into phosphoenolpyruvate (PEP). It is essential for the degradation of carbohydrates via glycolysis. In Cereibacter sphaeroides (strain ATCC 17025 / ATH 2.4.3) (Rhodobacter sphaeroides), this protein is Enolase.